A 263-amino-acid polypeptide reads, in one-letter code: Endonuclease 8 (263 aa).

Pro2 acts as the Schiff-base intermediate with DNA in catalysis. The active-site Proton donor is the Glu3. Lys53 functions as the Proton donor; for beta-elimination activity in the catalytic mechanism. DNA is bound by residues Gln70, Arg125, and Asn169. Residues 229–263 (KVFHRDGEACERCGGIIEKTTLSSRPFYWCPHCQK) form an FPG-type zinc finger. Catalysis depends on Arg253, which acts as the Proton donor; for delta-elimination activity.

This sequence belongs to the FPG family. It depends on Zn(2+) as a cofactor.

It catalyses the reaction 2'-deoxyribonucleotide-(2'-deoxyribose 5'-phosphate)-2'-deoxyribonucleotide-DNA = a 3'-end 2'-deoxyribonucleotide-(2,3-dehydro-2,3-deoxyribose 5'-phosphate)-DNA + a 5'-end 5'-phospho-2'-deoxyribonucleoside-DNA + H(+). Its function is as follows. Involved in base excision repair of DNA damaged by oxidation or by mutagenic agents. Acts as a DNA glycosylase that recognizes and removes damaged bases. Has a preference for oxidized pyrimidines, such as thymine glycol, 5,6-dihydrouracil and 5,6-dihydrothymine. Has AP (apurinic/apyrimidinic) lyase activity and introduces nicks in the DNA strand. Cleaves the DNA backbone by beta-delta elimination to generate a single-strand break at the site of the removed base with both 3'- and 5'-phosphates. The polypeptide is Endonuclease 8 (Salmonella enteritidis PT4 (strain P125109)).